Consider the following 226-residue polypeptide: uncharacterized protein (226 aa).

Residues 18-219 (LTIRNYTETD…YGVLMEWKNV (202 aa)) enclose the N-acetyltransferase domain.

Belongs to the acetyltransferase family.

This is an uncharacterized protein from Bacillus subtilis (strain 168).